The chain runs to 339 residues: Replication factor C subunit 2 (339 aa).

An ATP-binding site is contributed by 48–55 (YGPPGTGK).

This sequence belongs to the activator 1 small subunits family. As to quaternary structure, heterotetramer of subunits RFC2, RFC3, RFC4 and RFC5 that can form a complex with RFC1. In terms of tissue distribution, expressed in roots, leaves, shoot apical meristem (SAM), flag leaves and panicles.

The protein resides in the nucleus. Its function is as follows. May be involved in DNA replication and thus regulate cell proliferation. The protein is Replication factor C subunit 2 (RFC2) of Oryza sativa subsp. japonica (Rice).